The following is a 338-amino-acid chain: MRVGIVGATGQVGTVMRRILTERNFPVTELRLFASARSAGTELDGVTVEDAATADYTGLDIVLFSAGGATSKALAEKVASQGAVVIDNSSAWRKHPEVPLVVSEVNPHAIKDRPKGIIANPNCTTMAAMPVLRPLHDEAGLEALVVATYQAVSGSGLAGVAELHGQTQKVVADAEKLTHDGEAVDFPEPGVYKRPIAFNVLPLAGSIVDDGLNETDEEQKLRNESRKILEIPGLKVSGTCVRVPVFSGHSLQINARFARPISADGATELLKDAPGVELSDIPTPLQAAGKDPSYVGRIRSDETVDNGLALFVSNDNLRKGAALNAVQIAELVAAELKG.

NADP(+) contacts are provided by residues Thr-9–Val-12 and Arg-37–Ser-38. Phosphate is bound at residue Arg-93. Cys-123 acts as the Acyl-thioester intermediate in catalysis. Gln-150 provides a ligand contact to substrate. NADP(+) is bound at residue Ser-153 to Gly-154. Lys-220 contacts phosphate. Arg-242 is a substrate binding site. The Proton acceptor role is filled by His-249. Asn-316 serves as a coordination point for NADP(+).

It belongs to the aspartate-semialdehyde dehydrogenase family. Homodimer.

The enzyme catalyses L-aspartate 4-semialdehyde + phosphate + NADP(+) = 4-phospho-L-aspartate + NADPH + H(+). It participates in amino-acid biosynthesis; L-lysine biosynthesis via DAP pathway; (S)-tetrahydrodipicolinate from L-aspartate: step 2/4. Its pathway is amino-acid biosynthesis; L-methionine biosynthesis via de novo pathway; L-homoserine from L-aspartate: step 2/3. The protein operates within amino-acid biosynthesis; L-threonine biosynthesis; L-threonine from L-aspartate: step 2/5. Its function is as follows. Catalyzes the NADPH-dependent formation of L-aspartate-semialdehyde (L-ASA) by the reductive dephosphorylation of L-aspartyl-4-phosphate. This is Aspartate-semialdehyde dehydrogenase from Streptomyces akiyoshiensis.